Here is a 909-residue protein sequence, read N- to C-terminus: Protein translocase subunit SecA (909 aa).

Residues Gln-87, 105 to 109, and Asp-512 each bind ATP; that span reads GEGKT. The tract at residues 863–909 is disordered; that stretch reads LVGGGDEDDESIAAHTPMIRDGDKVGRNDPCPCGSGRKYKQCHGKLS. Positions 880–889 are enriched in basic and acidic residues; sequence MIRDGDKVGR. The Zn(2+) site is built by Cys-893, Cys-895, Cys-904, and His-905. The segment covering 899-909 has biased composition (basic residues); that stretch reads RKYKQCHGKLS.

It belongs to the SecA family. As to quaternary structure, monomer and homodimer. Part of the essential Sec protein translocation apparatus which comprises SecA, SecYEG and auxiliary proteins SecDF-YajC and YidC. Zn(2+) serves as cofactor.

The protein localises to the cell inner membrane. It localises to the cytoplasm. It carries out the reaction ATP + H2O + cellular proteinSide 1 = ADP + phosphate + cellular proteinSide 2.. Part of the Sec protein translocase complex. Interacts with the SecYEG preprotein conducting channel. Has a central role in coupling the hydrolysis of ATP to the transfer of proteins into and across the cell membrane, serving both as a receptor for the preprotein-SecB complex and as an ATP-driven molecular motor driving the stepwise translocation of polypeptide chains across the membrane. The chain is Protein translocase subunit SecA from Shewanella putrefaciens (strain CN-32 / ATCC BAA-453).